The primary structure comprises 149 residues: Large ribosomal subunit protein uL13 (149 aa).

Belongs to the universal ribosomal protein uL13 family. Part of the 50S ribosomal subunit.

Its function is as follows. This protein is one of the early assembly proteins of the 50S ribosomal subunit, although it is not seen to bind rRNA by itself. It is important during the early stages of 50S assembly. The protein is Large ribosomal subunit protein uL13 of Borrelia hermsii (strain HS1 / DAH).